A 698-amino-acid polypeptide reads, in one-letter code: Sialic acid-binding Ig-like lectin 11 (698 aa).

A signal peptide spans M1 to S27. Topologically, residues L28 to L561 are extracellular. One can recognise an Ig-like V-type domain in the interval D31–E134. Cystine bridges form between C49–C186, C54–C114, and C177–C228. Residues N55 and N90 are each glycosylated (N-linked (GlcNAc...) asparagine). R132 provides a ligand contact to N-acetylneuraminate. Ig-like C2-type domains lie at P159–R244, P251–S350, and P355–S452. A glycan (N-linked (GlcNAc...) asparagine) is linked at N262. Cysteines 287 and 334 form a disulfide. N-linked (GlcNAc...) asparagine glycans are attached at residues N366 and N375. A disulfide bridge connects residues C391 and C436. N-linked (GlcNAc...) asparagine glycans are attached at residues N497 and N515. A helical transmembrane segment spans residues G562–V584. Residues K585 to K698 are Cytoplasmic-facing. Residues A596–G635 form a disordered region. Positions L642–L647 match the ITIM motif motif. Residue Y668 is modified to Phosphotyrosine. Residues T675 to K698 are disordered.

The protein belongs to the immunoglobulin superfamily. SIGLEC (sialic acid binding Ig-like lectin) family. As to quaternary structure, interacts with PTPN6/SHP-1 and PTPN11/SHP-2 upon phosphorylation. In terms of processing, phosphorylated on tyrosine residues. Expressed by macrophages in various tissues including Kupffer cells. Also found in brain microglia.

It is found in the membrane. Its function is as follows. Putative adhesion molecule that mediates sialic-acid dependent binding to cells. Preferentially binds to alpha-2,8-linked sialic acid. The sialic acid recognition site may be masked by cis interactions with sialic acids on the same cell surface. In the immune response, may act as an inhibitory receptor upon ligand induced tyrosine phosphorylation by recruiting cytoplasmic phosphatase(s) via their SH2 domain(s) that block signal transduction through dephosphorylation of signaling molecules. The polypeptide is Sialic acid-binding Ig-like lectin 11 (SIGLEC11) (Homo sapiens (Human)).